The chain runs to 483 residues: MEYEAVIGLEVHVQLNTKTKAFCSCPNTFGAPANTLTCPRCQAHPGTLPIVNKEMVHKTIKAGLATNCTIQKKSRFARKHYFYPDLPSYYQITQMDEPICTEGHLDITVLNDDGSSYNKSIRINRIHMEEDAGKLVHDDTGRPLSYVDLNRAGCCLIECVSEPDISTGEEAYQYLTELKKIFKYIDVSDCNMEEGSLRCDANVSIRPKGSTELGTKTEVKNMNSFRNVRLAIDYEIKRQIKALNNGEKILQETRLYDAKENTTKGMRSKEGAADYRYFPDPDIPLLVLKDEEIEQAKKELPELPQQKRERLKKDYDLPDQDIVVLTEDAALADYYESAVKAYPKQPKKISNWIMVEVNAYLNKKLQTIKDFKPKAEHIAEIFKLIDEGVISGKIAKEIFEDMCETGEAPSAIVEKKGIKQVSDTGELETIIRKVLEENPKSVADFKAGKEKSFGFLVGQTMKATKGQGNPKLVNEVLRKILSE.

Belongs to the GatB/GatE family. GatB subfamily. In terms of assembly, heterotrimer of A, B and C subunits.

The catalysed reaction is L-glutamyl-tRNA(Gln) + L-glutamine + ATP + H2O = L-glutaminyl-tRNA(Gln) + L-glutamate + ADP + phosphate + H(+). It catalyses the reaction L-aspartyl-tRNA(Asn) + L-glutamine + ATP + H2O = L-asparaginyl-tRNA(Asn) + L-glutamate + ADP + phosphate + 2 H(+). In terms of biological role, allows the formation of correctly charged Asn-tRNA(Asn) or Gln-tRNA(Gln) through the transamidation of misacylated Asp-tRNA(Asn) or Glu-tRNA(Gln) in organisms which lack either or both of asparaginyl-tRNA or glutaminyl-tRNA synthetases. The reaction takes place in the presence of glutamine and ATP through an activated phospho-Asp-tRNA(Asn) or phospho-Glu-tRNA(Gln). This Brachyspira hyodysenteriae (strain ATCC 49526 / WA1) protein is Aspartyl/glutamyl-tRNA(Asn/Gln) amidotransferase subunit B.